The primary structure comprises 333 residues: NADH-quinone oxidoreductase subunit H (333 aa).

A run of 8 helical transmembrane segments spans residues 15–35, 88–108, 117–137, 159–179, 191–211, 239–259, 272–294, and 313–333; these read FFIFFGLAVLLLFAVLGFVTY, FILAPVIAFAPAFMVLAVIPF, IGVGLLYYIAVSGITTIGVVT, ISYEIPLVMSVIGVVLLAGSL, VWYIFAQPIGFVIFLIAAVAE, WAFFMLSEYVYFFGMSSLITV, GFIPGAVWFALKFSSVVFLLIWF, and ILLPIALANIFLTALIKELFF.

It belongs to the complex I subunit 1 family. NDH-1 is composed of 14 different subunits. Subunits NuoA, H, J, K, L, M, N constitute the membrane sector of the complex.

The protein localises to the cell membrane. It carries out the reaction a quinone + NADH + 5 H(+)(in) = a quinol + NAD(+) + 4 H(+)(out). Functionally, NDH-1 shuttles electrons from NADH, via FMN and iron-sulfur (Fe-S) centers, to quinones in the respiratory chain. The immediate electron acceptor for the enzyme in this species is believed to be ubiquinone. Couples the redox reaction to proton translocation (for every two electrons transferred, four hydrogen ions are translocated across the cytoplasmic membrane), and thus conserves the redox energy in a proton gradient. This subunit may bind ubiquinone. In Bacillus mycoides (strain KBAB4) (Bacillus weihenstephanensis), this protein is NADH-quinone oxidoreductase subunit H.